The primary structure comprises 277 residues: Phosphatidylserine decarboxylase proenzyme (277 aa).

Catalysis depends on charge relay system; for autoendoproteolytic cleavage activity residues aspartate 88, histidine 144, and serine 242. Serine 242 (schiff-base intermediate with substrate; via pyruvic acid; for decarboxylase activity) is an active-site residue. Serine 242 carries the pyruvic acid (Ser); by autocatalysis modification.

This sequence belongs to the phosphatidylserine decarboxylase family. PSD-B subfamily. Prokaryotic type I sub-subfamily. In terms of assembly, heterodimer of a large membrane-associated beta subunit and a small pyruvoyl-containing alpha subunit. Requires pyruvate as cofactor. Is synthesized initially as an inactive proenzyme. Formation of the active enzyme involves a self-maturation process in which the active site pyruvoyl group is generated from an internal serine residue via an autocatalytic post-translational modification. Two non-identical subunits are generated from the proenzyme in this reaction, and the pyruvate is formed at the N-terminus of the alpha chain, which is derived from the carboxyl end of the proenzyme. The autoendoproteolytic cleavage occurs by a canonical serine protease mechanism, in which the side chain hydroxyl group of the serine supplies its oxygen atom to form the C-terminus of the beta chain, while the remainder of the serine residue undergoes an oxidative deamination to produce ammonia and the pyruvoyl prosthetic group on the alpha chain. During this reaction, the Ser that is part of the protease active site of the proenzyme becomes the pyruvoyl prosthetic group, which constitutes an essential element of the active site of the mature decarboxylase.

The protein localises to the cell membrane. The catalysed reaction is a 1,2-diacyl-sn-glycero-3-phospho-L-serine + H(+) = a 1,2-diacyl-sn-glycero-3-phosphoethanolamine + CO2. Its pathway is phospholipid metabolism; phosphatidylethanolamine biosynthesis; phosphatidylethanolamine from CDP-diacylglycerol: step 2/2. Its function is as follows. Catalyzes the formation of phosphatidylethanolamine (PtdEtn) from phosphatidylserine (PtdSer). This Psychrobacter cryohalolentis (strain ATCC BAA-1226 / DSM 17306 / VKM B-2378 / K5) protein is Phosphatidylserine decarboxylase proenzyme.